Reading from the N-terminus, the 307-residue chain is NAD kinase 2 (307 aa).

Aspartate 77 acts as the Proton acceptor in catalysis. NAD(+)-binding positions include 77 to 78 (DG), 151 to 152 (NE), aspartate 181, 192 to 197 (TAYALS), and asparagine 251.

The protein belongs to the NAD kinase family. A divalent metal cation is required as a cofactor.

It localises to the cytoplasm. The enzyme catalyses NAD(+) + ATP = ADP + NADP(+) + H(+). In terms of biological role, involved in the regulation of the intracellular balance of NAD and NADP, and is a key enzyme in the biosynthesis of NADP. Catalyzes specifically the phosphorylation on 2'-hydroxyl of the adenosine moiety of NAD to yield NADP. The polypeptide is NAD kinase 2 (Thermosynechococcus vestitus (strain NIES-2133 / IAM M-273 / BP-1)).